A 293-amino-acid chain; its full sequence is MLTGSIVALVTPMDKTGEIDFLTLKQLVEFHIKSGTAAIVAVGTSGESATLDVDTHAKVVIKALEFADGRIPIIAGNGANSTSEAVLLSKRFADSGIIAGLNVTPYYNKPTQEGLFQHFKAIAESCDLPQILYNVPGRTSVDMLPETVARLSKIKNIIGIKEATGDLNRLADIKALVADDFALYSGDDATGCDFLLQGGHGVISVTTNIAPVEMAKMCEYALSGQADLAKKIDNQLAPVHKYLFIESNPIPVKWACAEMGLLPSADCRLPLMMLDKKYQPIVRNALIEAKLIS.

A pyruvate-binding site is contributed by serine 45. Tyrosine 133 (proton donor/acceptor) is an active-site residue. Residue lysine 161 is the Schiff-base intermediate with substrate of the active site. Isoleucine 203 serves as a coordination point for pyruvate.

This sequence belongs to the DapA family. Homotetramer; dimer of dimers.

It is found in the cytoplasm. It carries out the reaction L-aspartate 4-semialdehyde + pyruvate = (2S,4S)-4-hydroxy-2,3,4,5-tetrahydrodipicolinate + H2O + H(+). It participates in amino-acid biosynthesis; L-lysine biosynthesis via DAP pathway; (S)-tetrahydrodipicolinate from L-aspartate: step 3/4. Catalyzes the condensation of (S)-aspartate-beta-semialdehyde [(S)-ASA] and pyruvate to 4-hydroxy-tetrahydrodipicolinate (HTPA). The sequence is that of 4-hydroxy-tetrahydrodipicolinate synthase from Psychromonas ingrahamii (strain DSM 17664 / CCUG 51855 / 37).